The following is a 686-amino-acid chain: MSSPASKPASLLDASLLKPAMVDSLRKLHPRDVARNPVMFVVWAGSLLTTVLVVKDLVAPRPDAAPLGFTVQVTLWLWFTVLFANFAEAVAEGRGKAQAGALRKMRKETTARRWKDGREERVPAPDLRKGDEVICEAGDLIPGDGEVVEGIASVDESAITGESAPVIRESGGDRSAVTGGTKVLSDRIRVRISANPGDSFLDRMIGLVEGAARQKTPNEVALHILLVGLTLIFLLACVTLVPLALYSGVPLSGTAVVALLVCLIPTTIGGLLSAIGIAGMDRLLRKNVLAMSGRAVEAAGDVDTLLLDKTGTITLGNRMATELLPMPGVRMEELAEAAQLASLADETPEGRSIVTLVKDTYKMRPRELQAHHATFVPFTAQTRMSGCDLVDPHPRSIRKGAVDAIVTYVRSQGGAVPDELAQASGRIGDAGGTPLAVADGARLLGIIHLKDVVKGGIKERFDRFRAMGIRTVMITGDNPRTAAAIAREAGVDDFLAEATPEAKLALIRTEQGRGKLVAMTGDGTNDAPALAQADVGVAMNTGTQAAKEAGNMVDLDSNPTKLLEVVEVGKQLLMTHGTLTTFSIANDVAKYFAILPALFMGVFPQIAPLNVMGLSSPFSAVLSAVIFNALIIILLIPLALKGVRYRPLGAEALLRRSLLLYGVGGVIVPFVGIKVIDVLLGAVGLA.

The next 2 membrane-spanning stretches (helical) occupy residues 38–58 (VMFVVWAGSLLTTVLVVKDLV) and 64–84 (AAPLGFTVQVTLWLWFTVLFA). The tract at residues 101-123 (ALRKMRKETTARRWKDGREERVP) is disordered. A compositionally biased stretch (basic and acidic residues) spans 107–123 (KETTARRWKDGREERVP). A run of 2 helical transmembrane segments spans residues 224–244 (ILLVGLTLIFLLACVTLVPLA) and 257–277 (VALLVCLIPTTIGGLLSAIGI). The active-site 4-aspartylphosphate intermediate is the D308. ATP-binding positions include D345, E349, 378–385 (FTAQTRMS), and K399. Mg(2+)-binding residues include D522 and D526. The next 3 membrane-spanning stretches (helical) occupy residues 592-612 (FAILPALFMGVFPQIAPLNVM), 620-640 (AVLSAVIFNALIIILLIPLAL), and 666-686 (VIVPFVGIKVIDVLLGAVGLA).

Belongs to the cation transport ATPase (P-type) (TC 3.A.3) family. Type IA subfamily. In terms of assembly, the system is composed of three essential subunits: KdpA, KdpB and KdpC.

Its subcellular location is the cell membrane. It catalyses the reaction K(+)(out) + ATP + H2O = K(+)(in) + ADP + phosphate + H(+). In terms of biological role, part of the high-affinity ATP-driven potassium transport (or Kdp) system, which catalyzes the hydrolysis of ATP coupled with the electrogenic transport of potassium into the cytoplasm. This subunit is responsible for energy coupling to the transport system and for the release of the potassium ions to the cytoplasm. The chain is Potassium-transporting ATPase ATP-binding subunit from Myxococcus xanthus.